The following is a 31-amino-acid chain: Kappa-theraphotoxin-Ps1b (31 aa).

3 disulfides stabilise this stretch: C2–C16, C9–C21, and C15–C25. Residue M31 is modified to Methionine amide.

The protein belongs to the neurotoxin 30 (phrixotoxin) family. In terms of tissue distribution, expressed by the venom gland.

It is found in the secreted. Functionally, potent and specific blocker of Kv4.2/KCND2 (IC(50)=34 nM) and Kv4.3/KCND3 (IC(50)=71 nM) potassium channels. Acts by altering the gating properties of these channels. The polypeptide is Kappa-theraphotoxin-Ps1b (Paraphysa scrofa (Chilean copper tarantula)).